The sequence spans 388 residues: Pepsin A-1 (388 aa).

An N-terminal signal peptide occupies residues 1-15 (MKWLLLLGLVALSEC). 2 consecutive propeptides (activation peptide) follow at residues 16–40 (IIYKVPLVRKKSLRRNLSEHGLLKD) and 41–62 (FLKKHNLNPASKYFPQAEAPTL). In terms of domain architecture, Peptidase A1 spans 76–385 (YFGTIGIGTP…DRANNQVGLA (310 aa)). Asp94 is a catalytic residue. An intrachain disulfide couples Cys107 to Cys112. The residue at position 130 (Ser130) is a Phosphoserine. An intrachain disulfide couples Cys268 to Cys272. Residue Asp277 is part of the active site. Cys311 and Cys344 form a disulfide bridge.

The protein belongs to the peptidase A1 family. Post-translationally, each pepsinogen is converted to corresponding pepsin at pH 2.0 in part as a result of the release of a 47 AA activation segment and in part as a result of stepwise proteolytic cleavage via an intermediate form(s).

The protein resides in the secreted. It catalyses the reaction Preferential cleavage: hydrophobic, preferably aromatic, residues in P1 and P1' positions. Cleaves 1-Phe-|-Val-2, 4-Gln-|-His-5, 13-Glu-|-Ala-14, 14-Ala-|-Leu-15, 15-Leu-|-Tyr-16, 16-Tyr-|-Leu-17, 23-Gly-|-Phe-24, 24-Phe-|-Phe-25 and 25-Phe-|-Tyr-26 bonds in the B chain of insulin.. In terms of biological role, shows particularly broad specificity; although bonds involving phenylalanine and leucine are preferred, many others are also cleaved to some extent. In Macaca fuscata fuscata (Japanese macaque), this protein is Pepsin A-1 (PGA).